The primary structure comprises 101 residues: NAD(P)H-quinone oxidoreductase subunit 4L, chloroplastic (101 aa).

3 helical membrane-spanning segments follow: residues 2-22 (MLEH…YGLI), 32-52 (MCLE…SDFF), and 61-81 (IFSI…LAIV).

This sequence belongs to the complex I subunit 4L family. NDH is composed of at least 16 different subunits, 5 of which are encoded in the nucleus.

The protein localises to the plastid. It is found in the chloroplast thylakoid membrane. The catalysed reaction is a plastoquinone + NADH + (n+1) H(+)(in) = a plastoquinol + NAD(+) + n H(+)(out). It carries out the reaction a plastoquinone + NADPH + (n+1) H(+)(in) = a plastoquinol + NADP(+) + n H(+)(out). In terms of biological role, NDH shuttles electrons from NAD(P)H:plastoquinone, via FMN and iron-sulfur (Fe-S) centers, to quinones in the photosynthetic chain and possibly in a chloroplast respiratory chain. The immediate electron acceptor for the enzyme in this species is believed to be plastoquinone. Couples the redox reaction to proton translocation, and thus conserves the redox energy in a proton gradient. The polypeptide is NAD(P)H-quinone oxidoreductase subunit 4L, chloroplastic (Cicer arietinum (Chickpea)).